The following is a 370-amino-acid chain: Peptide chain release factor 2 (370 aa).

The residue at position 252 (Q252) is an N5-methylglutamine.

This sequence belongs to the prokaryotic/mitochondrial release factor family. In terms of processing, methylated by PrmC. Methylation increases the termination efficiency of RF2.

The protein localises to the cytoplasm. Its function is as follows. Peptide chain release factor 2 directs the termination of translation in response to the peptide chain termination codons UGA and UAA. The polypeptide is Peptide chain release factor 2 (Mycobacterium avium (strain 104)).